The sequence spans 268 residues: MAFATYEERASVHASPVASKLLRIMASKKTNLCASLDVRTTAELLSLVDQVGPYICLLKTHVDILDDFSMEGTVKPLKELAAKYNFLIFEDRKFADIGNTVKLQYSSGVYKIVQWADITNAHGVTGSGIVKGLKEAAQENSDEPRGLLMLAELSSKGSLAHGEYTTGTVEIAKTDKQFVFGFIAQRGMGGRDEGFDWLIMTPGVGLDDKGDALGQQYRTVDDVVSTGSDIIIVGRGLFGKGRDPTAESRRYRDAGWDAYLKRCNAASN.

Substrate is bound by residues Asp-37, 59 to 61, 91 to 100, Tyr-217, and Arg-235; these read KTH and DRKFADIGNT. Lys-93 functions as the Proton donor in the catalytic mechanism.

It belongs to the OMP decarboxylase family.

The enzyme catalyses orotidine 5'-phosphate + H(+) = UMP + CO2. Its pathway is pyrimidine metabolism; UMP biosynthesis via de novo pathway; UMP from orotate: step 2/2. The sequence is that of Orotidine 5'-phosphate decarboxylase (URA4) from Maudiozyma exigua (Yeast).